The sequence spans 180 residues: Large ribosomal subunit protein uL5 (180 aa).

This sequence belongs to the universal ribosomal protein uL5 family. Part of the 50S ribosomal subunit; part of the 5S rRNA/L5/L18/L25 subcomplex. Contacts the 5S rRNA and the P site tRNA. Forms a bridge to the 30S subunit in the 70S ribosome.

This is one of the proteins that bind and probably mediate the attachment of the 5S RNA into the large ribosomal subunit, where it forms part of the central protuberance. In the 70S ribosome it contacts protein S13 of the 30S subunit (bridge B1b), connecting the 2 subunits; this bridge is implicated in subunit movement. Contacts the P site tRNA; the 5S rRNA and some of its associated proteins might help stabilize positioning of ribosome-bound tRNAs. This Streptococcus uberis (strain ATCC BAA-854 / 0140J) protein is Large ribosomal subunit protein uL5.